Consider the following 179-residue polypeptide: ATP-dependent protease subunit HslV (179 aa).

The active site involves Thr7. The Na(+) site is built by Gly162, Cys165, and Thr168.

Belongs to the peptidase T1B family. HslV subfamily. As to quaternary structure, a double ring-shaped homohexamer of HslV is capped on each side by a ring-shaped HslU homohexamer. The assembly of the HslU/HslV complex is dependent on binding of ATP.

Its subcellular location is the cytoplasm. It catalyses the reaction ATP-dependent cleavage of peptide bonds with broad specificity.. Allosterically activated by HslU binding. Functionally, protease subunit of a proteasome-like degradation complex believed to be a general protein degrading machinery. This is ATP-dependent protease subunit HslV from Aromatoleum aromaticum (strain DSM 19018 / LMG 30748 / EbN1) (Azoarcus sp. (strain EbN1)).